A 193-amino-acid chain; its full sequence is Putative manganese efflux pump MntP (193 aa).

The next 6 helical transmembrane spans lie at 3–23, 41–61, 65–85, 106–126, 133–153, and 169–189; these read MYAT…ASIC, LIFG…GLYA, IIEW…CRMI, IVLI…GIGL, IVHT…LGML, and IGGL…LELF.

This sequence belongs to the MntP (TC 9.B.29) family.

It localises to the cell inner membrane. Its function is as follows. Probably functions as a manganese efflux pump. This Photorhabdus laumondii subsp. laumondii (strain DSM 15139 / CIP 105565 / TT01) (Photorhabdus luminescens subsp. laumondii) protein is Putative manganese efflux pump MntP.